The primary structure comprises 179 residues: ECF RNA polymerase sigma factor SigF (179 aa).

The interval 33 to 93 (RLRAYFMRRM…KLIDHWRRRK (61 aa)) is sigma-70 factor domain-2. The Polymerase core binding motif lies at 51-64 (DLVQETLLAVHLKR). Residues 123 to 170 (ALASLPQRQRMLVSDVKLTGLSLAEAGARAGISEGAAKVALHRALKAL) are sigma-70 factor domain-4. A DNA-binding region (H-T-H motif) is located at residues 145–164 (LAEAGARAGISEGAAKVALH).

It belongs to the sigma-70 factor family. ECF subfamily.

It is found in the cytoplasm. Functionally, sigma factors are initiation factors that promote the attachment of RNA polymerase to specific initiation sites and are then released. Extracytoplasmic function (ECF) sigma factors are held in an inactive form by a cognate anti-sigma factor (NrsF in this case) until they are released. Up-regulates expression of 4 operons (sigF-nrsF, CCNA_02834, CCNA_03001 to CCNA_02999 and CCNA_03363 to CCNA_03366) in response to potassium dichromate (K(2)Cr(2)O(7)) or cadmium chloride (CdCl(2)). Overexpression of sigF leads to higher expression of its regulon. This chain is ECF RNA polymerase sigma factor SigF, found in Caulobacter vibrioides (strain NA1000 / CB15N) (Caulobacter crescentus).